The primary structure comprises 235 residues: Large ribosomal subunit protein uL1 (235 aa).

This sequence belongs to the universal ribosomal protein uL1 family. Part of the 50S ribosomal subunit.

Functionally, binds directly to 23S rRNA. The L1 stalk is quite mobile in the ribosome, and is involved in E site tRNA release. Its function is as follows. Protein L1 is also a translational repressor protein, it controls the translation of the L11 operon by binding to its mRNA. This is Large ribosomal subunit protein uL1 from Nitratidesulfovibrio vulgaris (strain DSM 19637 / Miyazaki F) (Desulfovibrio vulgaris).